The primary structure comprises 577 residues: Moesin (577 aa).

Residues 2–295 (PKTISVRVTT…GNHELYMRRR (294 aa)) enclose the FERM domain. Position 74 is a phosphoserine (Ser-74). Lys-79 is subject to N6-acetyllysine. At Lys-83 the chain carries N6-succinyllysine. The short motif at 115–120 (IYCPPE) is the [IL]-x-C-x-x-[DE] motif element. Residue Tyr-116 is modified to Phosphotyrosine. Cys-117 bears the S-nitrosocysteine mark. N6-acetyllysine occurs at positions 139 and 165. Disordered regions lie at residues 322 to 342 (LLEN…KIER), 358 to 419 (TKKA…QLAS), and 468 to 518 (STPH…NERV). Basic and acidic residues predominate over residues 358–401 (TKKAQQELEEQTRRALELEQERKRAQSEAEKLAKERQEAEEAKE). Ser-407 carries the post-translational modification Phosphoserine. Positions 492-518 (AELRADAMAKDRSEEERTTEAEKNERV) are enriched in basic and acidic residues. Ser-527 bears the Phosphoserine mark. Position 558 is a phosphothreonine; by ROCK2 and STK10 (Thr-558).

In resting T-cells, part of a PAG1-NHERF1-MSN complex which is disrupted upon TCR activation. Interacts with NHERF1. Interacts with PPP1R16B. Interacts with SELPLG and SYK; these interactions mediate the activation of SYK by SELPLG. Interacts with PDPN (via cytoplasmic domain); this interaction activates RHOA and promotes epithelial-mesenchymal transition. Interacts with SPN/CD43 cytoplasmic tail. Interacts with CD44. Interacts with ICAM2. Interacts with ICAM3 (via C-terminus). Interacts with PDZD8. Interacts with F-actin. Interacts with CD46. Interacts with PTPN6. Post-translationally, phosphorylation on Thr-558 by STK10 negatively regulates lymphocyte migration and polarization. Phosphorylation on Thr-558 is crucial for the formation of microvilli-like structures. Phosphorylation by ROCK2 suppresses the head-to-tail association of the N-terminal and C-terminal halves resulting in an opened conformation which is capable of actin and membrane-binding. S-nitrosylation of Cys-117 is induced by interferon-gamma and oxidatively-modified low-densitity lipoprotein (LDL(ox)) implicating the iNOS-S100A8/9 transnitrosylase complex.

Its subcellular location is the cell membrane. The protein resides in the cytoplasm. It is found in the cytoskeleton. It localises to the apical cell membrane. The protein localises to the cell projection. Its subcellular location is the microvillus membrane. The protein resides in the microvillus. Ezrin-radixin-moesin (ERM) family protein that connects the actin cytoskeleton to the plasma membrane and thereby regulates the structure and function of specific domains of the cell cortex. Tethers actin filaments by oscillating between a resting and an activated state providing transient interactions between moesin and the actin cytoskeleton. Once phosphorylated on its C-terminal threonine, moesin is activated leading to interaction with F-actin and cytoskeletal rearrangement. These rearrangements regulate many cellular processes, including cell shape determination, membrane transport, and signal transduction. The role of moesin is particularly important in immunity acting on both T and B-cells homeostasis and self-tolerance, regulating lymphocyte egress from lymphoid organs. Modulates phagolysosomal biogenesis in macrophages. Also participates in immunologic synapse formation. This Mus musculus (Mouse) protein is Moesin.